The following is a 130-amino-acid chain: Small ribosomal subunit protein uS8x (130 aa).

Belongs to the universal ribosomal protein uS8 family.

The chain is Small ribosomal subunit protein uS8x (RPS15AD) from Arabidopsis thaliana (Mouse-ear cress).